The primary structure comprises 180 residues: Glycoprotein Xg (180 aa).

The first 21 residues, 1-21 (MESWWGLPCLAFLCFLMHARG), serve as a signal peptide directing secretion. The Extracellular segment spans residues 22 to 142 (QRDFDLADAL…GNPEGNMVAK (121 aa)). The tract at residues 28–133 (ADALDDPEPT…HGGDHHSTYG (106 aa)) is disordered. Pro residues predominate over residues 47–57 (KPKPPYYPQPE). Residues 143–163 (IVSPIVSVVVVTLLGAAASYF) form a helical membrane-spanning segment. Residues 164 to 180 (KLNNRRNCFRTHEPENV) lie on the Cytoplasmic side of the membrane.

This sequence belongs to the CD99 family. In terms of processing, O-glycosylated. In terms of tissue distribution, expressed in erythroid tissues, including thymus, bone marrow and fetal liver, and in several nonerythroid tissues, such as heart, placenta, skeletal muscle, thyroid and trachea, as well as in skin fibroblasts. Expression is low or undetectable in other tissues.

The protein localises to the cell membrane. The sequence is that of Glycoprotein Xg (XG) from Homo sapiens (Human).